Consider the following 170-residue polypeptide: Shikimate kinase (170 aa).

Residue 11 to 16 (LSGKST) participates in ATP binding. Position 15 (S15) interacts with Mg(2+). Substrate contacts are provided by D33, R57, and G79. An ATP-binding site is contributed by R119. R137 lines the substrate pocket.

Belongs to the shikimate kinase family. In terms of assembly, monomer. The cofactor is Mg(2+).

The protein localises to the cytoplasm. It catalyses the reaction shikimate + ATP = 3-phosphoshikimate + ADP + H(+). Its pathway is metabolic intermediate biosynthesis; chorismate biosynthesis; chorismate from D-erythrose 4-phosphate and phosphoenolpyruvate: step 5/7. Functionally, catalyzes the specific phosphorylation of the 3-hydroxyl group of shikimic acid using ATP as a cosubstrate. The chain is Shikimate kinase from Clostridium botulinum (strain ATCC 19397 / Type A).